A 593-amino-acid chain; its full sequence is Glutamate decarboxylase 1 (593 aa).

Residues 1–12 are compositionally biased toward low complexity; the sequence is MASSTPSPATSS. Residues 1-22 form a disordered region; the sequence is MASSTPSPATSSNAGADPNTTN. S77 carries the phosphoserine modification. Residue 189–191 coordinates 4-aminobutanoate; it reads QLS. K404 is modified (N6-(pyridoxal phosphate)lysine). A 4-aminobutanoate-binding site is contributed by R566.

Belongs to the group II decarboxylase family. As to quaternary structure, homodimer. The cofactor is pyridoxal 5'-phosphate. In terms of tissue distribution, expressed in brain and pancreatic islets.

It catalyses the reaction L-glutamate + H(+) = 4-aminobutanoate + CO2. Its function is as follows. Catalyzes the synthesis of the inhibitory neurotransmitter gamma-aminobutyric acid (GABA) with pyridoxal 5'-phosphate as cofactor. In Rattus norvegicus (Rat), this protein is Glutamate decarboxylase 1 (Gad1).